Consider the following 541-residue polypeptide: Chaperonin GroEL (541 aa).

Residues Thr29–Pro32, Asp86–Thr90, Gly413, Asn476–Ala478, and Asp492 each bind ATP.

The protein belongs to the chaperonin (HSP60) family. In terms of assembly, forms a cylinder of 14 subunits composed of two heptameric rings stacked back-to-back. Interacts with the co-chaperonin GroES.

It is found in the cytoplasm. The enzyme catalyses ATP + H2O + a folded polypeptide = ADP + phosphate + an unfolded polypeptide.. Its function is as follows. Together with its co-chaperonin GroES, plays an essential role in assisting protein folding. The GroEL-GroES system forms a nano-cage that allows encapsulation of the non-native substrate proteins and provides a physical environment optimized to promote and accelerate protein folding. This chain is Chaperonin GroEL, found in Streptococcus equi subsp. zooepidemicus (strain MGCS10565).